We begin with the raw amino-acid sequence, 389 residues long: MALNLKIGDIVQNKYRIEKLINRGGMNSYLFLASNLHVQEFGPLQKRQFTRLVLKVVQRTDKINDNNWKKFLDGTITTTRVSHKNLVQTFDVVSPRLSVLSENQVIVLEDTVMIVMEYVDGPSLREMLNQKGYFSVQEVVYYFTKLVKVINYLHSFEHQIIHRDLKPENILFTSNLTDIKLLDFGIASAVIRNAEKTEVLTDENSLFGTVSYMTPEVLESTVNKEGKRIRKPPTVQYDIYSLGVILFEMLVGRVPFNKSIDPKKERETIQKARNFDVPLMGNLRSDVPVSLENIVFKCTAVKRENSKWMYSDTKQLLADLAQWQTEQTLIKPVHERILEGQNEMRELMVSNYLPWYLRKGVLIFFSVVLLALLIAVVSFFIITGVVVHS.

A Protein kinase domain is found at 15–356 (YRIEKLINRG…LMVSNYLPWY (342 aa)). Asp-164 acts as the Proton acceptor in catalysis.

It belongs to the protein kinase superfamily. Ser/Thr protein kinase family.

The catalysed reaction is L-seryl-[protein] + ATP = O-phospho-L-seryl-[protein] + ADP + H(+). It catalyses the reaction L-threonyl-[protein] + ATP = O-phospho-L-threonyl-[protein] + ADP + H(+). The polypeptide is Putative serine/threonine-protein kinase (Mycoplasma pneumoniae (strain ATCC 29342 / M129 / Subtype 1) (Mycoplasmoides pneumoniae)).